Here is a 147-residue protein sequence, read N- to C-terminus: Lysozyme C-2 (147 aa).

Residues 1–18 form the signal peptide; sequence MKALVILGFLFLSVAVQG. The region spanning 19 to 147 is the C-type lysozyme domain; it reads KVFERCELAR…VSSYVEGCTL (129 aa). Intrachain disulfides connect cysteine 24–cysteine 145, cysteine 48–cysteine 133, cysteine 83–cysteine 99, and cysteine 95–cysteine 113. Catalysis depends on residues glutamate 53 and aspartate 71.

It belongs to the glycosyl hydrolase 22 family. As to quaternary structure, monomer. As to expression, stomach-specific.

It carries out the reaction Hydrolysis of (1-&gt;4)-beta-linkages between N-acetylmuramic acid and N-acetyl-D-glucosamine residues in a peptidoglycan and between N-acetyl-D-glucosamine residues in chitodextrins.. Its function is as follows. Lysozymes have primarily a bacteriolytic function; those in tissues and body fluids are associated with the monocyte-macrophage system and enhance the activity of immunoagents. In Bos taurus (Bovine), this protein is Lysozyme C-2 (LYZ2).